The chain runs to 301 residues: Epimerase family protein Mb2239 (301 aa).

Belongs to the NAD(P)-dependent epimerase/dehydratase family. SDR39U1 subfamily.

The chain is Epimerase family protein Mb2239 from Mycobacterium bovis (strain ATCC BAA-935 / AF2122/97).